The chain runs to 475 residues: Protein transport protein Sec61 subunit alpha (475 aa).

Over 1 to 32 the chain is Cytoplasmic; the sequence is MGFRFLDIVKPFTSLVPEVGQPDRKIPFREKV. A helical transmembrane segment spans residues 33-53; sequence LWTAICLFIFLVCSQIPLYGI. Residues 54–75 lie on the Lumenal side of the membrane; sequence RSTDSSDPFYWAKVIMASNRGT. A helical transmembrane segment spans residues 76-96; the sequence is LMELGISPIVTSGMVMQLLAG. Over 97–118 the chain is Cytoplasmic; sequence AKLIEIDQSVKADRDLFSAAQK. The helical transmembrane segment at 119–139 threads the bilayer; the sequence is LFGMLICVGQGVAYIWSGSYG. Topologically, residues 140–145 are lumenal; the sequence is DPAVLG. Residues 146–166 form a helical membrane-spanning segment; that stretch reads FGNCFLIVLQLFFAGIIVMLL. Residues 167–173 lie on the Cytoplasmic side of the membrane; the sequence is DELLQKG. A helical membrane pass occupies residues 174–194; that stretch reads YGIGSGISLFIATNICETIVW. Over 195–241 the chain is Lumenal; the sequence is KTFSPTTVSVGKGTEFEGAVIALFHLLLTRNDKVRALKEAFYRQNLP. Residues 242–262 form a helical membrane-spanning segment; sequence NITNLLATVLIFMVVIYFQGF. Over 263 to 289 the chain is Cytoplasmic; the sequence is RVDLPVKSTRVSGQQGTYPIKLFYTSN. A helical membrane pass occupies residues 290-310; sequence IPIILQSALVSNLYFISQLLY. The Lumenal portion of the chain corresponds to 311-353; it reads RRFPDNILVNLFGAWRTSEYSQQMIPVSGLTYYISSPNNMSAV. A helical transmembrane segment spans residues 354-374; it reads LADPFHALFYITFMLTSCALF. Over 375–411 the chain is Cytoplasmic; that stretch reads SKVWIEVSGSSARDVAKQLKDQQMTMKGHRDTSVIKE. The chain crosses the membrane as a helical span at residues 412–434; that stretch reads LNRYIPTAAAFGGLCIGALTVVA. The Lumenal segment spans residues 435-440; sequence DFMGAI. Residues 441–461 form a helical membrane-spanning segment; sequence GSGTGILLAVTIIYQYFETFV. At 462–475 the chain is on the cytoplasmic side; it reads KEQQELSGGIGGLF.

The protein belongs to the SecY/SEC61-alpha family. In terms of assembly, heterotrimeric complex composed of SEC61-alpha, SEC61-beta and SEC61-gamma.

It is found in the endoplasmic reticulum membrane. Its function is as follows. Appears to play a crucial role in the insertion of secretory and membrane polypeptides into the ER. It is required for assembly of membrane and secretory proteins. Found to be tightly associated with membrane-bound ribosomes, either directly or through adaptor proteins. This chain is Protein transport protein Sec61 subunit alpha (sec61a), found in Dictyostelium discoideum (Social amoeba).